Here is a 233-residue protein sequence, read N- to C-terminus: Ribose-5-phosphate isomerase A (233 aa).

Substrate-binding positions include 28–31 (SGST), 83–86 (DGAD), and 96–99 (KGGG). Residue Glu-105 is the Proton acceptor of the active site. Position 123 (Lys-123) interacts with substrate.

The protein belongs to the ribose 5-phosphate isomerase family. As to quaternary structure, homodimer.

It catalyses the reaction aldehydo-D-ribose 5-phosphate = D-ribulose 5-phosphate. It participates in carbohydrate degradation; pentose phosphate pathway; D-ribose 5-phosphate from D-ribulose 5-phosphate (non-oxidative stage): step 1/1. Catalyzes the reversible conversion of ribose-5-phosphate to ribulose 5-phosphate. The chain is Ribose-5-phosphate isomerase A from Bartonella bacilliformis (strain ATCC 35685 / KC583 / Herrer 020/F12,63).